Consider the following 163-residue polypeptide: Secreted RxLR effector protein 135 (163 aa).

Residues 1–20 form the signal peptide; sequence MRRLYLFVLILATFLTTSHG. The RxLR-dEER signature appears at 33-45; it reads RGLQEEAGEDEER. The disordered stretch occupies residues 94–127; the sequence is KNAGKPKRQTPQIAATGPAKPKVQSPEEAAAVPG.

Belongs to the RxLR effector family.

The protein resides in the secreted. It localises to the host nucleus. The protein localises to the host cytoplasm. Its function is as follows. Secreted effector that completely suppresses the host cell death induced by cell death-inducing proteins. The polypeptide is Secreted RxLR effector protein 135 (Plasmopara viticola (Downy mildew of grapevine)).